A 60-amino-acid chain; its full sequence is DNA-binding protein 7c (60 aa).

Residues aspartate 37 to lysine 60 form a disordered region. Positions valine 46–lysine 60 are enriched in basic and acidic residues.

It belongs to the 7 kDa DNA-binding/endoribonuclease P2 family. Monomer.

It localises to the cytoplasm. Functionally, can constrain negative DNA supercoils. May be involved in maintaining the integrity of the genome at high temperature. In Acidianus hospitalis (strain W1), this protein is DNA-binding protein 7c.